Consider the following 305-residue polypeptide: MKIAIVGGPTAVGKTDIMIEVCEEIGAEIISMDSRQIYRYMDIGTAKPTPEQRKRVPHHMIDILDPDEYYNAFLYRKDSLKAVEAILKRGKIPVYVGGTGLYADALVRGIFEGVPADENIRKELRELERREPGILRKMLEEFDPEAATRIHPNDLKRTIRALEVYMKTGRRISELQKETKGDDRFFIIVLTRERYDLYDRINRRVDRMIEMGLVDEVKRLLSMGYSKDLNSMKTIGYKEVIEYLEGKYDFEKMVHLIKRNTRHFARRQIIWFKRYENAIWYNLTFVSKEELKKTLKELIVKNFSV.

Residue 8-15 (GPTAVGKT) coordinates ATP. Residue 10–15 (TAVGKT) coordinates substrate. The interaction with substrate tRNA stretch occupies residues 33-36 (DSRQ).

It belongs to the IPP transferase family. As to quaternary structure, monomer. Mg(2+) is required as a cofactor.

It catalyses the reaction adenosine(37) in tRNA + dimethylallyl diphosphate = N(6)-dimethylallyladenosine(37) in tRNA + diphosphate. Catalyzes the transfer of a dimethylallyl group onto the adenine at position 37 in tRNAs that read codons beginning with uridine, leading to the formation of N6-(dimethylallyl)adenosine (i(6)A). In Thermotoga sp. (strain RQ2), this protein is tRNA dimethylallyltransferase.